Here is a 339-residue protein sequence, read N- to C-terminus: Uroporphyrinogen decarboxylase (339 aa).

Substrate-binding positions include 23–27 (RQAGR), Asp-72, Tyr-147, Thr-202, and His-315.

It belongs to the uroporphyrinogen decarboxylase family. In terms of assembly, homodimer.

The protein resides in the cytoplasm. It carries out the reaction uroporphyrinogen III + 4 H(+) = coproporphyrinogen III + 4 CO2. The protein operates within porphyrin-containing compound metabolism; protoporphyrin-IX biosynthesis; coproporphyrinogen-III from 5-aminolevulinate: step 4/4. Its function is as follows. Catalyzes the decarboxylation of four acetate groups of uroporphyrinogen-III to yield coproporphyrinogen-III. In Citrifermentans bemidjiense (strain ATCC BAA-1014 / DSM 16622 / JCM 12645 / Bem) (Geobacter bemidjiensis), this protein is Uroporphyrinogen decarboxylase.